Here is a 160-residue protein sequence, read N- to C-terminus: Ribosomal RNA large subunit methyltransferase H (160 aa).

S-adenosyl-L-methionine is bound by residues Leu-76, Gly-108, and 127–132 (LGKMTW).

The protein belongs to the RNA methyltransferase RlmH family. As to quaternary structure, homodimer.

It is found in the cytoplasm. It carries out the reaction pseudouridine(1915) in 23S rRNA + S-adenosyl-L-methionine = N(3)-methylpseudouridine(1915) in 23S rRNA + S-adenosyl-L-homocysteine + H(+). Its function is as follows. Specifically methylates the pseudouridine at position 1915 (m3Psi1915) in 23S rRNA. The polypeptide is Ribosomal RNA large subunit methyltransferase H (Rhizobium meliloti (strain 1021) (Ensifer meliloti)).